We begin with the raw amino-acid sequence, 517 residues long: Methylmalonyl-CoA decarboxylase subunit alpha (517 aa).

Residues 4–260 (AAKKIQDLQK…NNMEKAPEFG (257 aa)) enclose the CoA carboxyltransferase N-terminal domain. Residues 271-513 (ELDALMPDNP…REKLPAKKHG (243 aa)) enclose the CoA carboxyltransferase C-terminal domain.

The protein belongs to the AccD/PCCB family. As to quaternary structure, the methylmalonyl-CoA decarboxylase is composed of four subunits: the carboxyltransferase alpha subunit (MmdA), the tunnel beta subunit (MmdB), the biotin-containing gamma subunit (MmdC) and the delta subunit (MmdD).

The protein resides in the cell membrane. The catalysed reaction is (S)-methylmalonyl-CoA + Na(+)(in) + H(+)(out) = propanoyl-CoA + Na(+)(out) + CO2. Its function is as follows. Carboxyltransferase subunit of the sodium ion pump methylmalonyl-CoA decarboxylase, which converts the chemical energy of a decarboxylation reaction into an electrochemical gradient of Na(+) ions across the cytoplasmic membrane, thereby creating a sodium ion motive force that is used for ATP synthesis. The alpha subunit catalyzes the Na(+)-independent carboxyltransfer from methylmalonyl-CoA to the prosthetic biotin group located on the gamma subunit. The polypeptide is Methylmalonyl-CoA decarboxylase subunit alpha (Propionigenium modestum).